We begin with the raw amino-acid sequence, 1111 residues long: Probable arabinosyltransferase A (1111 aa).

A run of 13 helical transmembrane segments spans residues 12 to 34 (IIRL…VPLL), 205 to 224 (IAVG…LSAL), 333 to 355 (VWMR…HWVL), 370 to 387 (VAVL…LPFN), 394 to 413 (PLIA…AIAL), 423 to 445 (AVVA…ALLT), 462 to 484 (GLLA…VFHS), 530 to 547 (FPVL…VVLL), 554 to 576 (GLAS…LLTF), 581 to 603 (WAIQ…AFAF), 615 to 637 (TVYI…GWFG), 652 to 674 (IAGH…LAGG), and 695 to 717 (FLAT…GSLA). The disordered stretch occupies residues 804–831 (GLVNSDASPNKPNVTFSDSAGTAGGKGP). The segment covering 808–823 (SDASPNKPNVTFSDSA) has biased composition (polar residues).

This sequence belongs to the emb family.

The protein resides in the cell membrane. Arabinosyl transferase responsible for the polymerization of arabinose into the arabinan of arabinogalactan. The sequence is that of Probable arabinosyltransferase A (embA) from Mycobacterium leprae (strain TN).